We begin with the raw amino-acid sequence, 447 residues long: UDP-N-acetylmuramate--L-alanine ligase (447 aa).

G107 to T113 contributes to the ATP binding site.

The protein belongs to the MurCDEF family.

The protein resides in the cytoplasm. The enzyme catalyses UDP-N-acetyl-alpha-D-muramate + L-alanine + ATP = UDP-N-acetyl-alpha-D-muramoyl-L-alanine + ADP + phosphate + H(+). It functions in the pathway cell wall biogenesis; peptidoglycan biosynthesis. Functionally, cell wall formation. This Rubrobacter xylanophilus (strain DSM 9941 / JCM 11954 / NBRC 16129 / PRD-1) protein is UDP-N-acetylmuramate--L-alanine ligase.